The following is a 353-amino-acid chain: Putative transport protein YrrI (353 aa).

The next 8 membrane-spanning stretches (helical) occupy residues L8–L28, L37–L57, I77–I97, F165–M185, L220–P240, L243–G263, L269–L289, and V311–L331.

It belongs to the autoinducer-2 exporter (AI-2E) (TC 2.A.86) family.

It localises to the cell membrane. This is Putative transport protein YrrI (yrrI) from Bacillus subtilis (strain 168).